A 202-amino-acid chain; its full sequence is 3-isopropylmalate dehydratase small subunit (202 aa).

Belongs to the LeuD family. LeuD type 1 subfamily. Heterodimer of LeuC and LeuD.

The enzyme catalyses (2R,3S)-3-isopropylmalate = (2S)-2-isopropylmalate. It participates in amino-acid biosynthesis; L-leucine biosynthesis; L-leucine from 3-methyl-2-oxobutanoate: step 2/4. Catalyzes the isomerization between 2-isopropylmalate and 3-isopropylmalate, via the formation of 2-isopropylmaleate. This chain is 3-isopropylmalate dehydratase small subunit, found in Buchnera aphidicola subsp. Pemphigus spyrothecae.